The primary structure comprises 417 residues: Neuropeptide FF receptor 2 (417 aa).

Topologically, residues 1–45 (MSEKWDSNSSESWNHIWSGNDTQHHWYSDINITYVNYYLHQPQVA) are extracellular. Asn8, Asn20, and Asn31 each carry an N-linked (GlcNAc...) asparagine glycan. Residues 46-66 (AVFISSYLLIFVLCMVGNTVV) form a helical membrane-spanning segment. Residues 67–82 (CFIVIRNRHMHTVTNF) are Cytoplasmic-facing. A helical transmembrane segment spans residues 83 to 103 (FILNLAISDLLVGIFCMPITL). Over 104-119 (LDNIIAGWPFGSSMCK) the chain is Extracellular. A disulfide bridge links Cys118 with Cys206. Residues 120-140 (ISGLVQGISVAASVFTLVAIA) traverse the membrane as a helical segment. Topologically, residues 141–160 (VDRFRCVVYPFKPKLTVKTA) are cytoplasmic. Residues 161-181 (FVTIVIIWGLAIAIMTPSAIM) traverse the membrane as a helical segment. Residues 182–217 (LHVQEEKYYRVRLSSHNKTSTVYWCREDWPRHEMRR) lie on the Extracellular side of the membrane. Asn198 carries N-linked (GlcNAc...) asparagine glycosylation. A helical transmembrane segment spans residues 218 to 238 (IYTTVLFATIYLAPLSLIVIM). Topologically, residues 239–274 (YARIGASLFKTAAHCTGKQRPVQWHVSKKKQKVIKM) are cytoplasmic. The helical transmembrane segment at 275–295 (LLTVALLFILSWLPLWTLMML) threads the bilayer. Topologically, residues 296–310 (SDYTDLSPNKLRIIN) are extracellular. The helical transmembrane segment at 311–331 (IYIYPFAHWLAFCNSSVNPII) threads the bilayer. Residues 332–417 (YGFFNENFRN…MGEATNSTVA (86 aa)) are Cytoplasmic-facing. Residues 382–401 (SQNPGGENLGCGKSADNPTQ) form a disordered region.

The protein belongs to the G-protein coupled receptor 1 family.

It localises to the cell membrane. Functionally, receptor for NPAF (A-18-F-amide) and NPFF (F-8-F-amide) neuropeptides, also known as morphine-modulating peptides. Can also be activated by a variety of naturally occurring or synthetic FMRF-amide like ligands. This receptor mediates its action by association with G proteins that activate a phosphatidylinositol-calcium second messenger system. This is Neuropeptide FF receptor 2 (Npffr2) from Mus musculus (Mouse).